We begin with the raw amino-acid sequence, 201 residues long: Prostamide/prostaglandin F synthase (201 aa).

The protein belongs to the peroxiredoxin-like PRXL2 family. Prostamide/prostaglandin F synthase subfamily.

The protein resides in the cytoplasm. Its subcellular location is the cytosol. It carries out the reaction prostaglandin H2 + [thioredoxin]-dithiol = prostaglandin F2alpha + [thioredoxin]-disulfide. The catalysed reaction is prostamide F2alpha + [thioredoxin]-disulfide = prostamide H2 + [thioredoxin]-dithiol. Functionally, catalyzes the reduction of prostaglandin-ethanolamide H(2) (prostamide H(2)) to prostamide F(2alpha) with NADPH as proton donor. Also able to reduce prostaglandin H(2) to prostaglandin F(2alpha). This chain is Prostamide/prostaglandin F synthase (prxl2b), found in Xenopus tropicalis (Western clawed frog).